The following is a 1342-amino-acid chain: DNA-directed RNA polymerase subunit beta (1342 aa).

The protein belongs to the RNA polymerase beta chain family. In terms of assembly, the RNAP catalytic core consists of 2 alpha, 1 beta, 1 beta' and 1 omega subunit. When a sigma factor is associated with the core the holoenzyme is formed, which can initiate transcription.

It carries out the reaction RNA(n) + a ribonucleoside 5'-triphosphate = RNA(n+1) + diphosphate. Functionally, DNA-dependent RNA polymerase catalyzes the transcription of DNA into RNA using the four ribonucleoside triphosphates as substrates. The chain is DNA-directed RNA polymerase subunit beta from Citrobacter koseri (strain ATCC BAA-895 / CDC 4225-83 / SGSC4696).